Here is a 198-residue protein sequence, read N- to C-terminus: Angiopoietin-like protein 8 (198 aa).

Positions 1–21 (MPVPALCLLWALAMVTRPASA) are cleaved as a signal peptide.

The protein belongs to the ANGPTL8 family. In terms of assembly, interacts with ANGPTL3. In terms of processing, proteolytically cleaved at the N-terminus. As to expression, predominantly expressed in liver. Also expressed in adipose tissues.

It is found in the secreted. Hormone that acts as a blood lipid regulator by regulating serum triglyceride levels. May be involved in the metabolic transition between fasting and refeeding: required to direct fatty acids to adipose tissue for storage in the fed state. This is Angiopoietin-like protein 8 from Homo sapiens (Human).